Here is a 2157-residue protein sequence, read N- to C-terminus: Genome polyprotein (2157 aa).

Residue Gly2 is the site of N-myristoyl glycine; by host attachment. At 2–1470 (GAQVSRQNVG…DLSIANSIIT (1469 aa)) the chain is on the cytoplasmic side. The tract at residues 567–584 (PIEQNPVENYIDEVLNEV) is amphipathic alpha-helix. Residues His875 and Asp892 each act as for protease 2A activity in the active site. Cys909 and Cys911 together coordinate Zn(2+). Catalysis depends on Cys963, which acts as the For protease 2A activity. Residues Cys969 and His971 each contribute to the Zn(2+) site. Residues 1095–1164 (SDSWLKKFTE…NLRAADNATQ (70 aa)) form a membrane-binding region. The interval 1095–1228 (SDSWLKKFTE…PPGTGKSITT (134 aa)) is oligomerization. Residues 1116–1120 (GNKIS) are RNA-binding. The SF3 helicase domain occupies 1188–1350 (EAKRIKVLYN…YKDAQGKLNV (163 aa)). The Zn(2+) site is built by Cys1357, Cys1368, and Cys1373. Residues 1357–1373 (CNVNTKIGNAKCCPFVC) form a C4-type; degenerate zinc finger. Residues 1400–1407 (EDKRRRQV) are RNA-binding. An oligomerization region spans residues 1411–1416 (MSAIFQ). The stretch at 1471–1486 (IIANIISIAGIIFVIY) is an intramembrane region. Residues 1487–2157 (KLFCTLQGPY…LLKHEWYEKF (671 aa)) are Cytoplasmic-facing. Tyr1496 carries the post-translational modification O-(5'-phospho-RNA)-tyrosine. Residues 1515–1693 (GPEEEFGRSI…FSAMLLRSYF (179 aa)) enclose the Peptidase C3 domain. Residues His1554, Glu1585, and Cys1661 each act as for protease 3C activity in the active site. The 114-residue stretch at 1925–2038 (DCIMAFDYTN…SYKYTLDMEA (114 aa)) folds into the RdRp catalytic domain. Mg(2+)-binding residues include Asp1931 and Asp2024.

It belongs to the picornaviruses polyprotein family. As to quaternary structure, interacts with capsid protein VP1 and capsid protein VP3 to form heterotrimeric protomers. In terms of assembly, interacts with capsid protein VP0, and capsid protein VP3 to form heterotrimeric protomers. Five protomers subsequently associate to form pentamers which serve as building blocks for the capsid. Interacts with capsid protein VP2, capsid protein VP3 and capsid protein VP4 following cleavage of capsid protein VP0. Interacts with capsid protein VP1 and capsid protein VP3 in the mature capsid. As to quaternary structure, interacts with capsid protein VP0 and capsid protein VP1 to form heterotrimeric protomers. Five protomers subsequently associate to form pentamers which serve as building blocks for the capsid. Interacts with capsid protein VP4 in the mature capsid. Interacts with protein 2C; this interaction may be important for virion morphogenesis. In terms of assembly, interacts with capsid protein VP1 and capsid protein VP3. Homodimer. As to quaternary structure, homohexamer; forms a hexameric ring structure with 6-fold symmetry characteristic of AAA+ ATPases. Interacts (via N-terminus) with host RTN3 (via reticulon domain); this interaction is important for viral replication. Interacts with capsid protein VP3; this interaction may be important for virion morphogenesis. In terms of assembly, interacts with protein 3CD. Homodimer. Interacts with host GBF1. Interacts (via GOLD domain) with host ACBD3 (via GOLD domain); this interaction allows the formation of a viral protein 3A/ACBD3 heterotetramer with a 2:2 stoichiometry, which will stimulate the recruitment of host PI4KB in order to synthesize PI4P at the viral RNA replication sites. As to quaternary structure, interacts with RNA-directed RNA polymerase. In terms of assembly, interacts with protein 3AB and with RNA-directed RNA polymerase. Interacts with Viral protein genome-linked and with protein 3CD. Mg(2+) is required as a cofactor. Specific enzymatic cleavages in vivo by the viral proteases yield processing intermediates and the mature proteins. In terms of processing, myristoylation is required for the formation of pentamers during virus assembly. Further assembly of 12 pentamers and a molecule of genomic RNA generates the provirion. Post-translationally, during virion maturation, immature virions are rendered infectious following cleavage of VP0 into VP4 and VP2. This maturation seems to be an autocatalytic event triggered by the presence of RNA in the capsid and it is followed by a conformational change infectious virion. Myristoylation is required during RNA encapsidation and formation of the mature virus particle. In terms of processing, VPg is uridylylated by the polymerase into VPg-pUpU. This acts as a nucleotide-peptide primer for the genomic RNA replication.

It localises to the virion. It is found in the host cytoplasm. The protein localises to the host cytoplasmic vesicle membrane. Its subcellular location is the host nucleus. It carries out the reaction a ribonucleoside 5'-triphosphate + H2O = a ribonucleoside 5'-diphosphate + phosphate + H(+). The enzyme catalyses Selective cleavage of Tyr-|-Gly bond in the picornavirus polyprotein.. The catalysed reaction is RNA(n) + a ribonucleoside 5'-triphosphate = RNA(n+1) + diphosphate. It catalyses the reaction Selective cleavage of Gln-|-Gly bond in the poliovirus polyprotein. In other picornavirus reactions Glu may be substituted for Gln, and Ser or Thr for Gly.. With respect to regulation, replication or transcription is subject to high level of random mutations by the nucleotide analog ribavirin. Forms an icosahedral capsid of pseudo T=3 symmetry with capsid proteins VP2 and VP3. The capsid is 300 Angstroms in diameter, composed of 60 copies of each capsid protein and enclosing the viral positive strand RNA genome. Capsid protein VP1 mainly forms the vertices of the capsid. Capsid protein VP1 interacts with host cell receptor to provide virion attachment to target host cells. This attachment induces virion internalization. Tyrosine kinases are probably involved in the entry process. After binding to its receptor, the capsid undergoes conformational changes. Capsid protein VP1 N-terminus (that contains an amphipathic alpha-helix) and capsid protein VP4 are externalized. Together, they shape a pore in the host membrane through which viral genome is translocated to host cell cytoplasm. In terms of biological role, forms an icosahedral capsid of pseudo T=3 symmetry with capsid proteins VP2 and VP3. The capsid is 300 Angstroms in diameter, composed of 60 copies of each capsid protein and enclosing the viral positive strand RNA genome. Functionally, lies on the inner surface of the capsid shell. After binding to the host receptor, the capsid undergoes conformational changes. Capsid protein VP4 is released, Capsid protein VP1 N-terminus is externalized, and together, they shape a pore in the host membrane through which the viral genome is translocated into the host cell cytoplasm. Its function is as follows. Component of immature procapsids, which is cleaved into capsid proteins VP4 and VP2 after maturation. Allows the capsid to remain inactive before the maturation step. Cysteine protease that cleaves viral polyprotein and specific host proteins. It is responsible for the autocatalytic cleavage between the P1 and P2 regions, which is the first cleavage occurring in the polyprotein. Also cleaves the host translation initiation factor EIF4G1, in order to shut down the capped cellular mRNA translation. Inhibits the host nucleus-cytoplasm protein and RNA trafficking by cleaving host members of the nuclear pores. Counteracts stress granule formation probably by antagonizing its assembly or promoting its dissassembly. In terms of biological role, plays an essential role in the virus replication cycle by acting as a viroporin. Creates a pore in the host endoplasmic reticulum and as a consequence releases Ca2+ in the cytoplasm of infected cell. In turn, high levels of cytoplasmic calcium may trigger membrane trafficking and transport of viral ER-associated proteins to viroplasms, sites of viral genome replication. Functionally, induces and associates with structural rearrangements of intracellular membranes. Displays RNA-binding, nucleotide binding and NTPase activities. May play a role in virion morphogenesis and viral RNA encapsidation by interacting with the capsid protein VP3. Its function is as follows. Localizes the viral replication complex to the surface of membranous vesicles. Together with protein 3CD binds the Cis-Active RNA Element (CRE) which is involved in RNA synthesis initiation. Acts as a cofactor to stimulate the activity of 3D polymerase, maybe through a nucleid acid chaperone activity. Localizes the viral replication complex to the surface of membranous vesicles. It inhibits host cell endoplasmic reticulum-to-Golgi apparatus transport and causes the disassembly of the Golgi complex, possibly through GBF1 interaction. This would result in depletion of MHC, trail receptors and IFN receptors at the host cell surface. Plays an essential role in viral RNA replication by recruiting ACBD3 and PI4KB at the viral replication sites, thereby allowing the formation of the rearranged membranous structures where viral replication takes place. In terms of biological role, acts as a primer for viral RNA replication and remains covalently bound to viral genomic RNA. VPg is uridylylated prior to priming replication into VPg-pUpU. The oriI viral genomic sequence may act as a template for this. The VPg-pUpU is then used as primer on the genomic RNA poly(A) by the RNA-dependent RNA polymerase to replicate the viral genome. During genome replication, the VPg-RNA linkage is removed by the host TDP2, thereby accelerating replication. During the late stage of the replication cycle, host TDP2 is excluded from sites of viral RNA synthesis and encapsidation, allowing for the generation of progeny virions. Functionally, involved in the viral replication complex and viral polypeptide maturation. It exhibits protease activity with a specificity and catalytic efficiency that is different from protease 3C. Protein 3CD lacks polymerase activity. Protein 3CD binds to the 5'UTR of the viral genome. Its function is as follows. Replicates the viral genomic RNA on the surface of intracellular membranes. May form linear arrays of subunits that propagate along a strong head-to-tail interaction called interface-I. Covalently attaches UMP to a tyrosine of VPg, which is used to prime RNA synthesis. The positive stranded RNA genome is first replicated at virus induced membranous vesicles, creating a dsRNA genomic replication form. This dsRNA is then used as template to synthesize positive stranded RNA genomes. ss(+)RNA genomes are either translated, replicated or encapsidated. Major viral protease that mediates proteolytic processing of the polyprotein. Cleaves host EIF5B, contributing to host translation shutoff. Also cleaves host PABPC1, contributing to host translation shutoff. Cleaves host NLRP1, triggers host N-glycine-mediated degradation of the autoinhibitory NLRP1 N-terminal fragment. The sequence is that of Genome polyprotein from Homo sapiens (Human).